The following is a 224-amino-acid chain: MFFNKKNNQDELKKLAATEAAKSITTEITLGVGTGSTVGFLIEELVNYRDKIKTVVSSSEDSTRKLKALGFDVVDLNYAGEIDLYIDGADECNNHKELIKGGGAALTREKICVAAAKKFICIIDESKKVNTLGNFPLPIEVIPMARSYVARQIVKLGGQPVYREQTITDNGNVILDVYNLKIDNPLKLETELNQITGVVTNGIFALKPADTVIMATKDSNIVVL.

Substrate contacts are provided by residues 34 to 37, 87 to 90, and 100 to 103; these read TGST, DGAD, and KGGG. E109 (proton acceptor) is an active-site residue. K127 is a substrate binding site.

This sequence belongs to the ribose 5-phosphate isomerase family. Homodimer.

The catalysed reaction is aldehydo-D-ribose 5-phosphate = D-ribulose 5-phosphate. Its pathway is carbohydrate degradation; pentose phosphate pathway; D-ribose 5-phosphate from D-ribulose 5-phosphate (non-oxidative stage): step 1/1. In terms of biological role, catalyzes the reversible conversion of ribose-5-phosphate to ribulose 5-phosphate. The chain is Ribose-5-phosphate isomerase A from Francisella tularensis subsp. novicida (strain U112).